Here is a 404-residue protein sequence, read N- to C-terminus: Probable homogentisate phytyltransferase 1, chloroplastic (404 aa).

Residues 1-77 (MDSLRLRPSL…SHHRIPHRPT (77 aa)) constitute a chloroplast transit peptide. The segment at 68–96 (SHHRIPHRPTSSSADASGQPLQSSAEAHD) is disordered. Over residues 76-92 (PTSSSADASGQPLQSSA) the composition is skewed to polar residues. 9 helical membrane passes run 119-139 (TVIGTALSIVSVSLLAVENLS), 144-164 (LFLTGLLEAVVAALFMNIYIV), 184-204 (LASGEYSPATGVALVSAFAAM), 216-238 (PLFLALFISFILGTAYSINLPFL), 245-265 (VVAALCILAVRAVIVQLAFFL), 282-302 (LIFATAFMTFFSVVIALFKDI), 325-345 (VFWICVGLLEMAYCVAILMGA), 348-368 (ACLWSKYATVVGHAILAAILW), and 382-402 (ITSFYMFIWKLFYAEYLLIPL).

It belongs to the UbiA prenyltransferase family.

The protein localises to the plastid. It localises to the chloroplast thylakoid membrane. It carries out the reaction phytyl diphosphate + homogentisate + H(+) = 2-methyl-6-phytyl-1,4-benzene-1,4-diol + CO2 + diphosphate. Its pathway is cofactor biosynthesis; tocopherol biosynthesis. In terms of biological role, involved in the synthesis of tocopherol (vitamin E). Catalyzes the condensation of homogentisate and phytyl diphosphate to form dimethylphytylhydroquinone. The polypeptide is Probable homogentisate phytyltransferase 1, chloroplastic (HPT1) (Oryza sativa subsp. japonica (Rice)).